Reading from the N-terminus, the 274-residue chain is MFRQVYNLLEYLKFFLYGLIQGFTEFIPVSSTAHLKVISLFLGIDDPGASLSATIQLGSVLAIAWYFKNDIFNFRSQSSKKLIAYLLHKRLLRSILIGTIPIVLLGGSIKLFVPYFFDNVLRSNLSIALVSFLMAFFMYLADSSRRGSINIKNHNYSNSFLIGFFQAFAIFPGVSRSGITISSALISGWERGDAAKFSFLLGIPAISLAAIVEFISSFNDFFALGFFPLFVGLITTFVSSLLAIDFLLKYFSSNGLKIFIIYRVIFGIVILLNL.

The next 8 membrane-spanning stretches (helical) occupy residues 9 to 29 (LEYL…FIPV), 47 to 67 (PGAS…AWYF), 95 to 115 (ILIG…FVPY), 120 to 140 (VLRS…FMYL), 161 to 181 (LIGF…GITI), 197 to 217 (FSFL…FISS), 224 to 244 (LGFF…LLAI), and 254 to 274 (NGLK…LLNL).

Belongs to the UppP family.

It localises to the cell inner membrane. It carries out the reaction di-trans,octa-cis-undecaprenyl diphosphate + H2O = di-trans,octa-cis-undecaprenyl phosphate + phosphate + H(+). Its function is as follows. Catalyzes the dephosphorylation of undecaprenyl diphosphate (UPP). Confers resistance to bacitracin. This is Undecaprenyl-diphosphatase from Prochlorococcus marinus (strain AS9601).